The sequence spans 529 residues: PTS system alpha-glucoside-specific EIICB component (529 aa).

The PTS EIIC type-1 domain maps to 1 to 416 (MMKKVQRFGG…MDLKTPGRED (416 aa)). A run of 12 helical transmembrane segments spans residues 8–28 (FGGAMMAPVLLFAFTGIVVGL), 59–79 (GWTVFRQMPILFAIGLPISLA), 91–111 (FALYTTFNYFVAAILKVFYGI), 130–150 (VPTLDTNLFGGILIAALVVYL), 170–190 (VFVYIVGFVVMIPCAFLTVLI), 198–218 (ISALQGFMKASGIFGVWIYTF), 222–242 (ILIPTGLHHFVYTPFVFGPAA), 272–292 (GGFALHGNSKIFGAPGIALAM), 304–324 (VAALLIPIIFTAVISGITEPL), 328–348 (FLFIAPVLFAVHACLAATMAA), 352–372 (AFGVVGNMGGGLLDFFFLNWI), and 380–400 (GTVIAQIVIGLIFTAIYFVVF). One can recognise a PTS EIIB type-1 domain in the interval 450 to 529 (AQKGAIILEA…ERIEEMMKKG (80 aa)). The active-site Phosphocysteine intermediate; for EIIB activity is C472.

The protein resides in the cell membrane. Its function is as follows. The phosphoenolpyruvate-dependent sugar phosphotransferase system (sugar PTS), a major carbohydrate active -transport system, catalyzes the phosphorylation of incoming sugar substrates concomitantly with their translocation across the cell membrane. This system is probably involved in transport of the alpha-glucosides trehalulose, turanose, maltulose and palatinose. The chain is PTS system alpha-glucoside-specific EIICB component from Leptotrichia buccalis (strain ATCC 14201 / DSM 1135 / JCM 12969 / NCTC 10249 / C-1013-b).